The following is a 119-amino-acid chain: Protein TusC (119 aa).

It belongs to the DsrF/TusC family. In terms of assembly, heterohexamer, formed by a dimer of trimers. The hexameric TusBCD complex contains 2 copies each of TusB, TusC and TusD. The TusBCD complex interacts with TusE.

The protein resides in the cytoplasm. Its function is as follows. Part of a sulfur-relay system required for 2-thiolation of 5-methylaminomethyl-2-thiouridine (mnm(5)s(2)U) at tRNA wobble positions. The sequence is that of Protein TusC from Escherichia coli O45:K1 (strain S88 / ExPEC).